Consider the following 721-residue polypeptide: Polyphosphate kinase (721 aa).

N54 contributes to the ATP binding site. 2 residues coordinate Mg(2+): R379 and R409. Residues T434–T468 form the PLD phosphodiesterase domain. The active-site Phosphohistidine intermediate is H439. Positions 472, 568, and 596 each coordinate ATP.

It belongs to the polyphosphate kinase 1 (PPK1) family. Mg(2+) is required as a cofactor. In terms of processing, an intermediate of this reaction is the autophosphorylated ppk in which a phosphate is covalently linked to a histidine residue through a N-P bond.

It carries out the reaction [phosphate](n) + ATP = [phosphate](n+1) + ADP. Its function is as follows. Catalyzes the reversible transfer of the terminal phosphate of ATP to form a long-chain polyphosphate (polyP). The polypeptide is Polyphosphate kinase (Staphylococcus haemolyticus (strain JCSC1435)).